We begin with the raw amino-acid sequence, 211 residues long: Probable nicotinate-nucleotide adenylyltransferase (211 aa).

This sequence belongs to the NadD family.

It carries out the reaction nicotinate beta-D-ribonucleotide + ATP + H(+) = deamido-NAD(+) + diphosphate. It participates in cofactor biosynthesis; NAD(+) biosynthesis; deamido-NAD(+) from nicotinate D-ribonucleotide: step 1/1. Catalyzes the reversible adenylation of nicotinate mononucleotide (NaMN) to nicotinic acid adenine dinucleotide (NaAD). The protein is Probable nicotinate-nucleotide adenylyltransferase of Shewanella frigidimarina (strain NCIMB 400).